We begin with the raw amino-acid sequence, 393 residues long: Envelope glycoprotein D (393 aa).

The first 25 residues, 1–25 (MGRLTSGVGTAALLVVAVGLRVVCA), serve as a signal peptide directing secretion. The interaction with TNFRSF14 stretch occupies residues 25–57 (AKYALADPSLKMADPNRFRGKNLPVLDRLTDPP). Topologically, residues 26 to 339 (KYALADPSLK…HHAPAAPSNP (314 aa)) are virion surface. Histidine 64 contributes to the Zn(2+) binding site. Intrachain disulfides connect cysteine 91-cysteine 214, cysteine 131-cysteine 227, and cysteine 143-cysteine 152. Residues asparagine 119 and asparagine 146 are each glycosylated (N-linked (GlcNAc...) asparagine; by host). Aspartate 240 lines the Zn(2+) pocket. The interval 261–305 (LKIAGWHGPKPPYTSTLLPPELSDTTNATQPELVPEDPEDSALLE) is profusion. Residues 274–290 (TSTLLPPELSDTTNATQ) are compositionally biased toward polar residues. The disordered stretch occupies residues 274–301 (TSTLLPPELSDTTNATQPELVPEDPEDS). Asparagine 287 carries an N-linked (GlcNAc...) asparagine; by host glycan. The helical transmembrane segment at 340–363 (GLIIGALAGSTLAVLVIGGIAFWV) threads the bilayer. The Intravirion portion of the chain corresponds to 364-393 (RRRAQMAPKRLRLPHIRDDDAPPSHQPLFY).

Belongs to the herpesviridae glycoprotein D family. In terms of assembly, homodimer. Interacts with host receptor TNFRSF14. Interacts with host receptor NECTIN1. Interacts with host receptor NECTIN2. Interacts (via profusion domain) with gB; this interaction occurs in the absence of gH/gL. Interacts (via profusion domain) with gH/gL heterodimer; this interaction occurs in the absence of gB. Associates with the gB-gH/gL-gD complex. Interacts (via C-terminus) with UL11 tegument protein.

It localises to the virion membrane. Its function is as follows. Envelope glycoprotein that binds to the host cell entry receptors NECTIN1, NECTIN2 and TNFRSF14/HVEM, promoting the virus entry into host cells. May trigger fusion with host membrane, by recruiting the fusion machinery composed of gB and gH/gL. The polypeptide is Envelope glycoprotein D (gD) (Homo sapiens (Human)).